The primary structure comprises 504 residues: MEEFQGYLELDRFRQHDFLYPFIFREYSYALAHGHGLNRYMLLENIGYDNKSSLLIVKRLITTMYQQNYLIISANDSKKNPFFGYNKNLHSKILSEGFAIIVEIPFYLRLISSLEGAEIVRFYNLRSIHSIFPFLEEKFPHLNYSADILIPYPAHLEILVQTLRYRVKDASYLHLLRFFLHEYSNCNSLIITNKSISIFSKSNPRFFLFLYNSYLCEYESIFLFLRNQSSHLRLTSSGVLFERLCLYRKIEHFAEVFANDFPVIPCFLKDPFMHYVRYQGKSILASKDTPLLMNKWKSYLVNLWQCHFDVWSHAASIRINQLSKHSLDFLSYFSSVRRNPAVVRNQMLENSFLLNNAPNKLDTIVPIIPLIGSLAKAKFCNAVGHPISKLTRADLSDFEIINRFLHICRNLSHYYSGSSKKKNMYRIKYILRLSCVKTLARKHKSTARAFLKRVDSEFFQEFFTEEGGFISLIFPRASFALRRLYSGRVWYLDIIFINGLSNHE.

Belongs to the intron maturase 2 family. MatK subfamily.

It localises to the plastid. The protein localises to the chloroplast. Its function is as follows. Usually encoded in the trnK tRNA gene intron. Probably assists in splicing its own and other chloroplast group II introns. The polypeptide is Maturase K (Quercus suber (Cork oak)).